A 440-amino-acid chain; its full sequence is Tetratricopeptide repeat protein 5 (440 aa).

5 TPR repeats span residues 7-61, 68-98, 103-130, 136-174, and 179-216; these read EEAK…EEVL, AQAL…AVKL, VEAW…SGAL, KVSL…AVQM, and GRSW…AEKV. Residues 13–24 carry the Nuclear export signal motif; that stretch reads LQKLQGLVDRLY. Serine 203 carries the phosphoserine; by ATM modification. At serine 221 the chain carries Phosphoserine; by CHEK2. One copy of the TPR 6 repeat lies at 224–253; that stretch reads PDLHLNRATLHKYEESYGEALEGFSQAAAL. The interval 285–287 is mediates interaction with 28S rRNA of ribosome-coding tubulin; the sequence is KPK.

As to quaternary structure, interacts with JMY and p300/EP300; the interaction occurs in the nucleus and augments the association between JMY and p300/EP300 in response to DNA damage. Interacts with PRMT5; the interaction is DNA damage-dependent and promotes PRMT5 interaction with p53/TP53 and subsequent methylation. Forms a complex with HSF1 and p300/EP300; these interactions augment chromatin-bound HSF1 and p300/EP300 histone acetyltransferase activity, resulting in enhanced heat-shock-responsive transcription. Interacts with JMY; the interaction occurs in the cytoplasm and results in the inhibition of JYM's nucleation activity. Interacts with ribosome-coding tubulin (via 60S subunit 28S rRNA and protein uL24/RPL26) and the N-terminal of nascent tubulin polypeptide (via alpha-tubulin MREC motif and beta-tubulin MREI motif); these interactions result in tubulin mRNA-targeted degradation. Interacts with ATP5F1B; the interaction occurs in the mitochondria and results in ATP production decrease. Interacts with p53/TP53; the interaction occurs in the mitochondria and results in increased apoptosis. Phosphorylation by ATM kinase induces nuclear accumulation while interfering with nuclear export, and phosphorylation by CHEK2 kinase enhances nuclear stability. In terms of tissue distribution, expressed in heart, brain, spleen, lung, liver, skeletal muscle, kidney and testis.

It is found in the nucleus. The protein resides in the cytoplasm. Its subcellular location is the cytoplasmic vesicle. The protein localises to the mitochondrion matrix. In terms of biological role, cofactor involved in the regulation of various cellular mechanisms such as actin regulation, autophagy, chromatin regulation and DNA repair. In physiological conditions, interacts with cofactor JMY in the cytoplasm which prevents JMY's actin nucleation activity and ability to activate the Arp2/3 complex. Acts as a negative regulator of nutrient stress-induced autophagy by inhibiting JMY's interaction with MAP1LC3B, thereby preventing autophagosome formation. Involves in tubulin autoregulation by promoting its degradation in response to excess soluble tubulin. To do so, associates with the active ribosome near the ribosome exit tunnel and with nascent tubulin polypeptides early during their translation, triggering tubulin mRNA-targeted degradation. Following DNA damage, phosphorylated by DNA damage responsive protein kinases ATM and CHEK2, leading to its nuclear accumulation and stability. Nuclear TTC5/STRAP promotes the assembly of a stress-responsive p53/TP53 coactivator complex, which includes the coactivators JMY and p300, thereby increasing p53/TP53-dependent transcription and apoptosis. Also recruits arginine methyltransferase PRMT5 to p53/TP53 when DNA is damaged, allowing PRMT5 to methylate p53/TP53. In DNA stress conditions, also prevents p53/TP53 degradation by E3 ubiquitin ligase MDM2. Upon heat-shock stress, forms a chromatin-associated complex with heat-shock factor 1 HSF1 and p300/EP300 to stimulate heat-shock-responsive transcription, thereby increasing cell survival. Mitochondrial TTC5/STRAP interacts with ATP synthase subunit beta ATP5F1B which decreased ATP synthase activity and lowers mitochondrial ATP production, thereby regulating cellular respiration and mitochondrial-dependent apoptosis. Mitochondrial TTC5/STRAP also regulates p53/TP53-mediated apoptosis. The sequence is that of Tetratricopeptide repeat protein 5 from Mus musculus (Mouse).